A 403-amino-acid polypeptide reads, in one-letter code: MTETKVSEFQLKGKYGKYGGQYVPEVLMPALEELDVGYEKYKNDPESLAELDHYLRDFAGRETPLYFARNLSKKYGTKVYLKREDLVHGGAHKLNNALGQALLAKFMGKTRLIAETGAGQHGTATAMVGATLGFETIVYMGAKDIKRQQMNAYRMELMGTEVRAVETGSKTLKDAINEAMRDWVTNIENTHYLIGSVVGPHPYPMIVRDFQSVIGKEVKEQAMEKEGRLPDSIIACAGGGSNAMGTFHPFIEDREVKLIAVEAGGKGLKCTEKAALHSASLCIGEEGILHGARTKILQDKNGQILESESVSAGLDYSGVGPELAYLSESGRVTARYVTDDEALDAFNELSRLEGIIPALESSHALAYLKKAAESGELGEFVVVNLSGRGDKDLETVLSLRRGV.

Lysine 93 carries the post-translational modification N6-(pyridoxal phosphate)lysine.

Belongs to the TrpB family. As to quaternary structure, tetramer of two alpha and two beta chains. Requires pyridoxal 5'-phosphate as cofactor.

The catalysed reaction is (1S,2R)-1-C-(indol-3-yl)glycerol 3-phosphate + L-serine = D-glyceraldehyde 3-phosphate + L-tryptophan + H2O. The protein operates within amino-acid biosynthesis; L-tryptophan biosynthesis; L-tryptophan from chorismate: step 5/5. Its function is as follows. The beta subunit is responsible for the synthesis of L-tryptophan from indole and L-serine. This Methanosarcina acetivorans (strain ATCC 35395 / DSM 2834 / JCM 12185 / C2A) protein is Tryptophan synthase beta chain 1 (trpB1).